The chain runs to 70 residues: DNA gyrase inhibitor YacG (70 aa).

Positions 21, 24, 36, and 40 each coordinate Zn(2+).

The protein belongs to the DNA gyrase inhibitor YacG family. Interacts with GyrB. Requires Zn(2+) as cofactor.

Inhibits all the catalytic activities of DNA gyrase by preventing its interaction with DNA. Acts by binding directly to the C-terminal domain of GyrB, which probably disrupts DNA binding by the gyrase. The polypeptide is DNA gyrase inhibitor YacG (Sinorhizobium medicae (strain WSM419) (Ensifer medicae)).